A 306-amino-acid polypeptide reads, in one-letter code: Aspartate carbamoyltransferase catalytic subunit (306 aa).

Carbamoyl phosphate is bound by residues Arg-55 and Thr-56. An L-aspartate-binding site is contributed by Lys-84. Carbamoyl phosphate-binding residues include Arg-105, His-133, and Gln-136. 2 residues coordinate L-aspartate: Arg-166 and Arg-227. Carbamoyl phosphate contacts are provided by Leu-265 and Pro-266.

Belongs to the aspartate/ornithine carbamoyltransferase superfamily. ATCase family. Heterododecamer (2C3:3R2) of six catalytic PyrB chains organized as two trimers (C3), and six regulatory PyrI chains organized as three dimers (R2).

It carries out the reaction carbamoyl phosphate + L-aspartate = N-carbamoyl-L-aspartate + phosphate + H(+). Its pathway is pyrimidine metabolism; UMP biosynthesis via de novo pathway; (S)-dihydroorotate from bicarbonate: step 2/3. Catalyzes the condensation of carbamoyl phosphate and aspartate to form carbamoyl aspartate and inorganic phosphate, the committed step in the de novo pyrimidine nucleotide biosynthesis pathway. This chain is Aspartate carbamoyltransferase catalytic subunit, found in Neisseria meningitidis serogroup A / serotype 4A (strain DSM 15465 / Z2491).